The sequence spans 91 residues: MGILLSICRRRHDPLTDVEGQPINVREEFEMFEEGDEATEACVFLNPNMGTDEYDEEDEGGDGGEGREPQPEVKTTPYPKRKKIKLKADVL.

Gly-2 is lipidated: N-myristoyl glycine; by host. The disordered stretch occupies residues 48 to 81; it reads NMGTDEYDEEDEGGDGGEGREPQPEVKTTPYPKR. Acidic residues predominate over residues 52-62; that stretch reads DEYDEEDEGGD.

The protein belongs to the herpesviridae cytoplasmic envelopment protein 3 family. As to quaternary structure, interacts with cytoplasmic envelopment protein 2; this interaction is essential for the proper localization of each protein to the assembly complex and thus for the production of infectious virus. In terms of processing, myristoylation and palmitoylation (probably on one or more of the nearby cysteines at the N-terminus) enable membrane-binding and Golgi apparatus-specific targeting and are essential for efficient packaging. Phosphorylated. Phosphorylation does not seem to be required for recycling to the host Golgi apparatus. Packaging is selective for underphosphorylated forms.

It localises to the virion tegument. The protein localises to the virion membrane. Its subcellular location is the host cell membrane. It is found in the host Golgi apparatus membrane. Plays an important role in the cytoplasmic envelopment of tegument proteins and capsids during the assembly and egress processes. Also participates in viral entry at the fusion step probably by regulating the core fusion machinery. The protein is Cytoplasmic envelopment protein 3 (38) of Equus caballus (Horse).